The chain runs to 314 residues: Ribosomal RNA small subunit methyltransferase H (314 aa).

S-adenosyl-L-methionine-binding positions include 40–42, Asp-60, Phe-85, Asp-107, and Gln-114; that span reads GGH.

Belongs to the methyltransferase superfamily. RsmH family.

It is found in the cytoplasm. The catalysed reaction is cytidine(1402) in 16S rRNA + S-adenosyl-L-methionine = N(4)-methylcytidine(1402) in 16S rRNA + S-adenosyl-L-homocysteine + H(+). Specifically methylates the N4 position of cytidine in position 1402 (C1402) of 16S rRNA. This is Ribosomal RNA small subunit methyltransferase H from Hydrogenovibrio crunogenus (strain DSM 25203 / XCL-2) (Thiomicrospira crunogena).